Here is a 55-residue protein sequence, read N- to C-terminus: MAKSVREKIKLVSSAGTGHFYTTSKNKRTQTTKLEFKKYDPVVRQHVIYKEAKIK.

It belongs to the bacterial ribosomal protein bL33 family.

This chain is Large ribosomal subunit protein bL33, found in Hamiltonella defensa subsp. Acyrthosiphon pisum (strain 5AT).